Reading from the N-terminus, the 541-residue chain is 2-succinyl-5-enolpyruvyl-6-hydroxy-3-cyclohexene-1-carboxylate synthase (541 aa).

This sequence belongs to the TPP enzyme family. MenD subfamily. In terms of assembly, homodimer. The cofactor is Mg(2+). Requires Mn(2+) as cofactor. Thiamine diphosphate serves as cofactor.

It catalyses the reaction isochorismate + 2-oxoglutarate + H(+) = 5-enolpyruvoyl-6-hydroxy-2-succinyl-cyclohex-3-ene-1-carboxylate + CO2. It functions in the pathway quinol/quinone metabolism; 1,4-dihydroxy-2-naphthoate biosynthesis; 1,4-dihydroxy-2-naphthoate from chorismate: step 2/7. The protein operates within quinol/quinone metabolism; menaquinone biosynthesis. In terms of biological role, catalyzes the thiamine diphosphate-dependent decarboxylation of 2-oxoglutarate and the subsequent addition of the resulting succinic semialdehyde-thiamine pyrophosphate anion to isochorismate to yield 2-succinyl-5-enolpyruvyl-6-hydroxy-3-cyclohexene-1-carboxylate (SEPHCHC). In Rhodococcus opacus (strain B4), this protein is 2-succinyl-5-enolpyruvyl-6-hydroxy-3-cyclohexene-1-carboxylate synthase.